Consider the following 564-residue polypeptide: Probable diguanylate cyclase DgcQ (564 aa).

The next 2 helical transmembrane spans lie at 20 to 40 (LGPG…STLL) and 360 to 380 (IALT…WYVI). Residues 428 to 563 (HPFSVIQVDL…GRNRVFASDN (136 aa)) enclose the GGDEF domain. D436 is a Mg(2+) binding site. N444, H449, and D453 together coordinate substrate. A Mg(2+)-binding site is contributed by E479. Residue E479 is the Proton acceptor of the active site.

In terms of assembly, homodimer. Requires Mg(2+) as cofactor.

The protein localises to the cell inner membrane. The catalysed reaction is 2 GTP = 3',3'-c-di-GMP + 2 diphosphate. It participates in glycan metabolism; bacterial cellulose biosynthesis. It functions in the pathway purine metabolism; 3',5'-cyclic di-GMP biosynthesis. Catalyzes the synthesis of cyclic-di-GMP (c-di-GMP) via the condensation of 2 GTP molecules. Cyclic-di-GMP is a second messenger which controls cell surface-associated traits in bacteria. Involved in the regulation of cellulose production. This Escherichia coli (strain K12) protein is Probable diguanylate cyclase DgcQ.